We begin with the raw amino-acid sequence, 489 residues long: ITVPSTSSKNLQNSLAFSSSSLSGDKIQTTSFLNRRYCRISSRAPIVVSPKAVSDSKNSQTCLDPEASRSVLGIILGGGAGTRLYPLTKKRAKPAVPLGANYRLIDIPVSNCLNSNISKIYVLTQFNSASLNRHLSRAYASNMGGYKNEGFVEVLAAQQSPENPNWFQGTADAVRQYLWLFEEHNVLEYLILAGDHLYRMDYERFVQAHRETDADITVAALPMDEKRATAFGLMKIDEEGRIIEFAEKPKGEQLKAMKVDTTILGLDDERAKEMPFIASMGIYVISKDVMLNLLREQFPGANDFGSEVIPGATSIGLRVQAYLYDGYWEDIGTIEAFYNANLGITKKPVPDFSFYDRSSPIYTQPRYLPPSKMLDADITDSVIGEGCVIKNCKIHHSVIGLRSCISEGAIIEDTLLMGADYYETDADRKFLAAKGSVPIGIGNARIGDDVKIINSDNVQEAARETDGYFIKSGIVTIIKDAMIPSGTVI.

The transit peptide at 1-52 (ITVPSTSSKNLQNSLAFSSSSLSGDKIQTTSFLNRRYCRISSRAPIVVSPKA) directs the protein to the chloroplast.

This sequence belongs to the bacterial/plant glucose-1-phosphate adenylyltransferase family. Heterotetramer. In terms of tissue distribution, prominently expressed in the leaves. A lower level expression is seen in the roots.

It is found in the plastid. The protein resides in the chloroplast. It localises to the amyloplast. The catalysed reaction is alpha-D-glucose 1-phosphate + ATP + H(+) = ADP-alpha-D-glucose + diphosphate. The protein operates within glycan biosynthesis; starch biosynthesis. With respect to regulation, activated by 3'phosphoglycerate, inhibited by orthophosphate. Allosteric regulation. This protein plays a role in synthesis of starch. It catalyzes the synthesis of the activated glycosyl donor, ADP-glucose from Glc-1-P and ATP. The polypeptide is Glucose-1-phosphate adenylyltransferase small subunit, chloroplastic/amyloplastic (AGPB1) (Beta vulgaris (Sugar beet)).